A 206-amino-acid chain; its full sequence is Homoserine/homoserine lactone efflux protein (206 aa).

The next 6 helical transmembrane spans lie at 5–25, 45–65, 68–88, 117–137, 148–168, and 182–202; these read WWFAYLLTSIILSLSPGSGAI, GLQTGLAIHIVLVGVGLGTLF, SVIAFEVLKWAGAAYLIWLGI, FVNLTNPKSIVFLAALFPQFI, IVLGVTTIVVDIIVMIGYATL, and MKALNKIFGSLFMLVGALLAS.

Belongs to the Rht family.

It localises to the cell membrane. In terms of biological role, conducts the efflux of homoserine and homoserine lactone. The sequence is that of Homoserine/homoserine lactone efflux protein (rhtB) from Escherichia coli O157:H7.